The sequence spans 359 residues: Trans-enoyl reductase FSL5 (359 aa).

47 to 50 (IDGK) contributes to the NADP(+) binding site. Position 134–141 (134–141 (SGVGTIGL)) interacts with substrate. NADP(+) is bound by residues 169–172 (STAT), 192–195 (SPHN), Y210, and 257–258 (LE). Residue 277–281 (GPTLL) coordinates substrate. NADP(+) is bound at residue 346-347 (VS).

It belongs to the zinc-containing alcohol dehydrogenase family. As to quaternary structure, monomer.

Its pathway is secondary metabolite biosynthesis. Trans-enoyl reductase; part of the gene cluster that mediates the biosynthesis of fusarielins F, G and H, decaketide compounds with 5 methylations and a decaline core that act as mycoestrogens as they stimulate growth of MCF-7 breast cancer cells. The initial compound in the pathway is produced by the reducing polyketide synthase FSL1. FSL1 lacks an active enoyl reductase (ER) domain and biosynthesis of fusarielins relies on the trans-acting enoyl reductase FSL5, before it is released through hydrolysis catalyzed by the thioesterase FSL2. Fusarielins F, G, and H have a C11=C12 cis double bond and is fully reduced between C10 and C11 and between C12 and C13. FSL3 can be involved in the formation of the C11=C12 cis double bond by moving a hypothetical C10=C11 or C12=C13 trans double bond to form prefusarielin. Prefusarielin is oxygenated at C15 and C16 by the cytochrome P450 monooxygenase FSL4, resulting in fusarielin F, which subsequently is epoxidized into fusarielin G by the same enzyme. The final step in the pathway is a reduction of the carboxylic acid moiety to yield fusarielin H via a still undetermined mechanism. The protein is Trans-enoyl reductase FSL5 of Gibberella zeae (strain ATCC MYA-4620 / CBS 123657 / FGSC 9075 / NRRL 31084 / PH-1) (Wheat head blight fungus).